The sequence spans 177 residues: Large ribosomal subunit protein uL6 (177 aa).

This sequence belongs to the universal ribosomal protein uL6 family. In terms of assembly, part of the 50S ribosomal subunit.

Functionally, this protein binds to the 23S rRNA, and is important in its secondary structure. It is located near the subunit interface in the base of the L7/L12 stalk, and near the tRNA binding site of the peptidyltransferase center. This is Large ribosomal subunit protein uL6 from Sinorhizobium medicae (strain WSM419) (Ensifer medicae).